The sequence spans 158 residues: Large ribosomal subunit protein bL21 (158 aa).

The disordered stretch occupies residues 106 to 158 (SKPKKAAAKPIKEEATAAKGTKDTAVEKKAEKTAEKKTASQKKAAVASKSKKD). Basic and acidic residues predominate over residues 115–143 (PIKEEATAAKGTKDTAVEKKAEKTAEKKT). Over residues 146-158 (QKKAAVASKSKKD) the composition is skewed to low complexity.

It belongs to the bacterial ribosomal protein bL21 family. Part of the 50S ribosomal subunit. Contacts protein L20.

Functionally, this protein binds to 23S rRNA in the presence of protein L20. The chain is Large ribosomal subunit protein bL21 from Bartonella tribocorum (strain CIP 105476 / IBS 506).